Consider the following 134-residue polypeptide: Aspartate 1-decarboxylase (134 aa).

S25 (schiff-base intermediate with substrate; via pyruvic acid) is an active-site residue. At S25 the chain carries Pyruvic acid (Ser). T57 serves as a coordination point for substrate. Catalysis depends on Y58, which acts as the Proton donor. 73–75 (GAA) contacts substrate.

This sequence belongs to the PanD family. Heterooctamer of four alpha and four beta subunits. Pyruvate is required as a cofactor. In terms of processing, is synthesized initially as an inactive proenzyme, which is activated by self-cleavage at a specific serine bond to produce a beta-subunit with a hydroxyl group at its C-terminus and an alpha-subunit with a pyruvoyl group at its N-terminus.

It is found in the cytoplasm. It catalyses the reaction L-aspartate + H(+) = beta-alanine + CO2. It functions in the pathway cofactor biosynthesis; (R)-pantothenate biosynthesis; beta-alanine from L-aspartate: step 1/1. In terms of biological role, catalyzes the pyruvoyl-dependent decarboxylation of aspartate to produce beta-alanine. The polypeptide is Aspartate 1-decarboxylase (Citrifermentans bemidjiense (strain ATCC BAA-1014 / DSM 16622 / JCM 12645 / Bem) (Geobacter bemidjiensis)).